We begin with the raw amino-acid sequence, 393 residues long: Protein TsgA (393 aa).

The next 12 membrane-spanning stretches (helical) occupy residues 11–31 (WISF…GMVM), 51–71 (FLNA…EIIP), 78–98 (FGFI…SLAL), 101–121 (AAMF…TFLI), 134–154 (LLFT…VAAF), 162–182 (WYWV…LTFG), 206–226 (IGVL…LGFI), 245–265 (ALVS…SFIL), 273–293 (ILTV…TGTQ), 298–318 (WFIL…ITLG), 332–352 (FILT…GPIV), and 361–381 (LLTA…LGFV).

It belongs to the major facilitator superfamily. TsgA family.

It localises to the cell inner membrane. The protein is Protein TsgA of Salmonella schwarzengrund (strain CVM19633).